Reading from the N-terminus, the 342-residue chain is MTQKIAILGASGYTGAELARIIATHPEMEITALSGDRKAGMRMGEVFPHLRHIGLPDLVKIEEIDFSGIDLAFCALPHATSQAVIAELPRDLKVVDLSADFRLRDAAEYEKWYGKPHAAMDLQAEAVYGLTEFYREELKTARLCAGTGCNAAAGQYAIRPLIEAGVIDLDEIVIDLKAGVSGAGRSLKENLLHAELAGGTMPYSAGGKHRHLGEFDQEFSKVAGRPVRVQFTPHLMPFNRGILATVYVRGTPEDIHAALASRYENEVFLEVLPFGQLASTRSVAGSNFVHLGVIGDRLPGRAVVTVALDNLTKGSSGQAIQNANLMLGLPETLGLMLAPVFP.

The active site involves Cys149.

Belongs to the NAGSA dehydrogenase family. Type 1 subfamily.

The protein resides in the cytoplasm. It catalyses the reaction N-acetyl-L-glutamate 5-semialdehyde + phosphate + NADP(+) = N-acetyl-L-glutamyl 5-phosphate + NADPH + H(+). The protein operates within amino-acid biosynthesis; L-arginine biosynthesis; N(2)-acetyl-L-ornithine from L-glutamate: step 3/4. In terms of biological role, catalyzes the NADPH-dependent reduction of N-acetyl-5-glutamyl phosphate to yield N-acetyl-L-glutamate 5-semialdehyde. This is N-acetyl-gamma-glutamyl-phosphate reductase from Rhodobacter capsulatus (strain ATCC BAA-309 / NBRC 16581 / SB1003).